Reading from the N-terminus, the 251-residue chain is Flap endonuclease Xni (251 aa).

Residue Asp104 participates in Mg(2+) binding. Residues 160–249 (VLPRQLPDYW…IDGNLQQLRL (90 aa)) enclose the 5'-3' exonuclease domain. Residues Leu171, Ala172, Pro180, Val182, and Ile185 each contribute to the K(+) site. Residues 184-189 (GIGPKS) form an interaction with DNA region.

It belongs to the Xni family. It depends on Mg(2+) as a cofactor. K(+) serves as cofactor.

Its function is as follows. Has flap endonuclease activity. During DNA replication, flap endonucleases cleave the 5'-overhanging flap structure that is generated by displacement synthesis when DNA polymerase encounters the 5'-end of a downstream Okazaki fragment. In Salmonella paratyphi A (strain ATCC 9150 / SARB42), this protein is Flap endonuclease Xni.